A 132-amino-acid polypeptide reads, in one-letter code: Small ribosomal subunit protein uS8c (132 aa).

It belongs to the universal ribosomal protein uS8 family. In terms of assembly, part of the 30S ribosomal subunit.

It is found in the plastid. The protein resides in the chloroplast. In terms of biological role, one of the primary rRNA binding proteins, it binds directly to 16S rRNA central domain where it helps coordinate assembly of the platform of the 30S subunit. The chain is Small ribosomal subunit protein uS8c (rps8) from Angiopteris evecta (Mule's foot fern).